We begin with the raw amino-acid sequence, 276 residues long: Large ribosomal subunit protein uL2 (276 aa).

The disordered stretch occupies residues 225–276; it reads VMNPVDHPHGGGEGKTAAGRDPVSPWGTPTKGYRTRSNKRTDSMIVQKRHKR.

It belongs to the universal ribosomal protein uL2 family. As to quaternary structure, part of the 50S ribosomal subunit. Forms a bridge to the 30S subunit in the 70S ribosome.

In terms of biological role, one of the primary rRNA binding proteins. Required for association of the 30S and 50S subunits to form the 70S ribosome, for tRNA binding and peptide bond formation. It has been suggested to have peptidyltransferase activity; this is somewhat controversial. Makes several contacts with the 16S rRNA in the 70S ribosome. The chain is Large ribosomal subunit protein uL2 from Cupriavidus taiwanensis (strain DSM 17343 / BCRC 17206 / CCUG 44338 / CIP 107171 / LMG 19424 / R1) (Ralstonia taiwanensis (strain LMG 19424)).